We begin with the raw amino-acid sequence, 363 residues long: 3-dehydroquinate synthase (363 aa).

NAD(+) is bound by residues serine 72–lysine 77, threonine 130–threonine 131, lysine 142, and lysine 151. The Zn(2+) site is built by glutamate 184, histidine 247, and histidine 264.

Belongs to the sugar phosphate cyclases superfamily. Dehydroquinate synthase family. Co(2+) serves as cofactor. Zn(2+) is required as a cofactor. The cofactor is NAD(+).

The protein localises to the cytoplasm. It catalyses the reaction 7-phospho-2-dehydro-3-deoxy-D-arabino-heptonate = 3-dehydroquinate + phosphate. It participates in metabolic intermediate biosynthesis; chorismate biosynthesis; chorismate from D-erythrose 4-phosphate and phosphoenolpyruvate: step 2/7. Catalyzes the conversion of 3-deoxy-D-arabino-heptulosonate 7-phosphate (DAHP) to dehydroquinate (DHQ). This Bacillus anthracis (strain A0248) protein is 3-dehydroquinate synthase.